Here is a 427-residue protein sequence, read N- to C-terminus: Serine--tRNA ligase (427 aa).

235–237 (TAE) contributes to the L-serine binding site. ATP contacts are provided by residues 266 to 268 (RRE) and valine 282. L-serine is bound at residue glutamate 289. 353–356 (EASS) contacts ATP. Serine 389 provides a ligand contact to L-serine.

The protein belongs to the class-II aminoacyl-tRNA synthetase family. Type-1 seryl-tRNA synthetase subfamily. In terms of assembly, homodimer. The tRNA molecule binds across the dimer.

The protein resides in the cytoplasm. The catalysed reaction is tRNA(Ser) + L-serine + ATP = L-seryl-tRNA(Ser) + AMP + diphosphate + H(+). It catalyses the reaction tRNA(Sec) + L-serine + ATP = L-seryl-tRNA(Sec) + AMP + diphosphate + H(+). Its pathway is aminoacyl-tRNA biosynthesis; selenocysteinyl-tRNA(Sec) biosynthesis; L-seryl-tRNA(Sec) from L-serine and tRNA(Sec): step 1/1. Catalyzes the attachment of serine to tRNA(Ser). Is also able to aminoacylate tRNA(Sec) with serine, to form the misacylated tRNA L-seryl-tRNA(Sec), which will be further converted into selenocysteinyl-tRNA(Sec). The protein is Serine--tRNA ligase of Chlorobium phaeobacteroides (strain BS1).